The primary structure comprises 197 residues: UPF0301 protein Adeh_3962 (197 aa).

It belongs to the UPF0301 (AlgH) family.

This chain is UPF0301 protein Adeh_3962, found in Anaeromyxobacter dehalogenans (strain 2CP-C).